Consider the following 309-residue polypeptide: Tagatose-6-phosphate kinase (309 aa).

The protein belongs to the carbohydrate kinase PfkB family. LacC subfamily.

The enzyme catalyses D-tagatofuranose 6-phosphate + ATP = D-tagatofuranose 1,6-bisphosphate + ADP + H(+). It functions in the pathway carbohydrate metabolism; D-tagatose 6-phosphate degradation; D-glyceraldehyde 3-phosphate and glycerone phosphate from D-tagatose 6-phosphate: step 1/2. This chain is Tagatose-6-phosphate kinase, found in Streptococcus pyogenes serotype M28 (strain MGAS6180).